Reading from the N-terminus, the 335-residue chain is MTAPKVGINGFGRIGRLVLRAAIEKGTCQVVAINDPFIDLDYMAYMLKYDSTHGRYAGDVSIKDGKLQVDGNSITVFAHRDPAEIPWATAAADYIVEATGVFTLKDKAAAHFKGGAKKVVISAPSKDAPMFVCGVNEAKYTPDLDIISNASCTTNCLAPLVKVIHEKYGIEEGLMTTVHATTATQKTVDGPSNKDWRGGRGRGRNIIPSSTGAAKAVGKVMPELNGKLTGMAFRVPTPDVSVVDLTVRLASETTYEDIKATMKAAADDSMKGIMKYTEDAVVSTDFIHDDASCIFDASAGIMLNSKFCKLVAWYDNEWGYSNRVVDLIAHISKVQ.

NAD(+) contacts are provided by residues Arg13–Ile14, Asp35, and Arg80. Residues Ser151–Thr153, Thr182, Thr211–Gly212, and Arg234 each bind D-glyceraldehyde 3-phosphate. The active-site Nucleophile is Cys152. Asn316 lines the NAD(+) pocket.

This sequence belongs to the glyceraldehyde-3-phosphate dehydrogenase family. Homotetramer.

The protein localises to the cytoplasm. It carries out the reaction D-glyceraldehyde 3-phosphate + phosphate + NAD(+) = (2R)-3-phospho-glyceroyl phosphate + NADH + H(+). It participates in carbohydrate degradation; glycolysis; pyruvate from D-glyceraldehyde 3-phosphate: step 1/5. The sequence is that of Glyceraldehyde-3-phosphate dehydrogenase, cytosolic (GAPC) from Chondrus crispus (Carrageen Irish moss).